The chain runs to 2481 residues: Tetratricopeptide repeat protein 28 (2481 aa).

Methionine 1 is subject to N-acetylmethionine. Positions 1-14 (MEQSPPPAPEPTQG) are enriched in pro residues. A disordered region spans residues 1–48 (MEQSPPPAPEPTQGPTPARSRRRREPESPPASAPIPLFGADTIGQRSP). Serine 28 carries the post-translational modification Phosphoserine. TPR repeat units lie at residues 58-91 (FVEK…DPQN), 93-125 (ILYS…NPKW), 126-159 (PKAY…DPKS), 196-229 (FVVV…GTCS), 234-267 (GSVF…AKTL), 274-307 (CRAH…AMKL), 314-347 (SSAL…AKQS), 354-387 (AREL…AKDL), 394-427 (ARAY…AQEL), 434-467 (MRAY…AEDL), 474-507 (GRAS…AQEL), 514-547 (GRAY…SMEV), 554-587 (ASTH…AREL), 594-627 (ARAL…APDL), 634-667 (GKVC…AKDL), 674-707 (AKAY…AQSL), 714-747 (FRAL…AHQV), 754-787 (ASAY…YQEL), 794-827 (CRAH…GQKL), 834-867 (AQVY…LQQL), 877-910 (GRAY…AQSL), 917-950 (AKAY…AHEL), 957-990 (AQAY…ARDM), 997-1030 (SDAA…AEET), 1037-1070 (GRAY…AAQM), 1077-1110 (TVSY…AEQL), 1117-1150 (AKIR…FETI), and 1169-1202 (TSSY…AFAD). Position 1590 is a phosphoserine (serine 1590). Disordered stretches follow at residues 2004-2055 (FVSK…DEEE), 2075-2161 (NTCF…DPQE), and 2176-2339 (AVER…PADA). Polar residues-rich tracts occupy residues 2029-2043 (AYLQ…QLPP) and 2096-2122 (SVSS…NSPF). Serine 2104 bears the Phosphoserine mark. The segment covering 2130–2146 (SSDTGESDQSSTETDST) has biased composition (low complexity). Residues 2149-2159 (SQEESNPKLDP) show a composition bias toward basic and acidic residues. The span at 2183–2214 (SGGQVSKSNNPEDGVQAPSSTAVFRASETSAF) shows a compositional bias: polar residues. Serine 2224 and serine 2251 each carry phosphoserine. Residues 2238-2282 (RSSSLPKVSSGYSSPTTSEMSIKDSPSQHSGRPSPGCDSQTSQLD) show a composition bias toward polar residues. The span at 2307–2339 (SPSSGHQSPAGSAPSPALSYSSAGSARSSPADA) shows a compositional bias: low complexity. 2 positions are modified to phosphoserine: serine 2393 and serine 2398. The segment at 2420–2467 (QHDGAPPKAPPNGHWRTETTSLGSLPLPAGPPATAPARPLRLPSGNGY) is disordered.

In terms of assembly, interacts with AURKB. As to expression, widely expressed in fetal tissues. In adult tissues, expressed in testis and ovary and, at much lower levels, in kidney and pancreas.

It localises to the cytoplasm. The protein localises to the cytoskeleton. The protein resides in the microtubule organizing center. Its subcellular location is the centrosome. It is found in the spindle. It localises to the spindle pole. The protein localises to the midbody. In terms of biological role, during mitosis, may be involved in the condensation of spindle midzone microtubules, leading to the formation of midbody. The protein is Tetratricopeptide repeat protein 28 (TTC28) of Homo sapiens (Human).